We begin with the raw amino-acid sequence, 451 residues long: Tubulin alpha-1B chain (451 aa).

Positions 1-4 (MREC) match the MREC motif motif. GTP is bound by residues Gly10, Gln11, Ala12, and Gln15. At Lys40 the chain carries N6,N6,N6-trimethyllysine; alternate. Lys40 carries the N6-acetyllysine; alternate modification. Ser48 is modified (phosphoserine). 12 residues coordinate GTP: Glu71, Ala99, Ser140, Gly143, Gly144, Thr145, Gly146, Thr179, Glu183, Asn206, Tyr224, and Asn228. Glu71 serves as a coordination point for Mg(2+). Ser232 carries the post-translational modification Phosphoserine. Residue Leu252 coordinates GTP. Glu254 is an active-site residue. Tyr282 carries the 3'-nitrotyrosine modification. Lys326 participates in a covalent cross-link: Glycyl lysine isopeptide (Lys-Gly) (interchain with G-Cter in ubiquitin). Arg339 is subject to Omega-N-methylarginine. Lys370 participates in a covalent cross-link: Glycyl lysine isopeptide (Lys-Gly) (interchain with G-Cter in ubiquitin). Residues 432–451 (YEEVGVDSVEGEGEEEGEEY) form a disordered region. Ser439 is modified (phosphoserine). 5-glutamyl polyglutamate is present on residues Glu443 and Glu445. The residue at position 451 (Tyr451) is a 3'-nitrotyrosine.

The protein belongs to the tubulin family. Heterodimer of alpha- and beta-tubulin. A typical microtubule is a hollow water-filled tube with an outer diameter of 25 nm and an inner diameter of 15 nM. Alpha-beta heterodimers associate head-to-tail to form protofilaments running lengthwise along the microtubule wall with the beta-tubulin subunit facing the microtubule plus end conferring a structural polarity. Microtubules usually have 13 protofilaments but different protofilament numbers can be found in some organisms and specialized cells. Interacts with gamma-tubulin; the interaction allows microtubules to nucleate from the gamma-tubulin ring complex (gTuRC). Nascent microtubule interacts (via alpha-tubulin MREC motif) with TTC5/STRAP; this interaction may result in tubulin mRNA-targeted degradation. Component of sperm flagellar doublet microtubules. The cofactor is Mg(2+). In terms of processing, some glutamate residues at the C-terminus are polyglutamylated, resulting in polyglutamate chains on the gamma-carboxyl group. Polyglutamylation plays a key role in microtubule severing by spastin (SPAST). SPAST preferentially recognizes and acts on microtubules decorated with short polyglutamate tails: severing activity by SPAST increases as the number of glutamates per tubulin rises from one to eight, but decreases beyond this glutamylation threshold. Glutamylation is also involved in cilia motility. Some glutamate residues at the C-terminus are monoglycylated but not polyglycylated due to the absence of functional TTLL10 in human. Monoglycylation is mainly limited to tubulin incorporated into cilia and flagella axonemes, which is required for their stability and maintenance. Flagella glycylation controls sperm motility. Both polyglutamylation and monoglycylation can coexist on the same protein on adjacent residues, and lowering glycylation levels increases polyglutamylation, and reciprocally. Post-translationally, acetylation of alpha chains at Lys-40 is located inside the microtubule lumen. This modification has been correlated with increased microtubule stability, intracellular transport and ciliary assembly. In terms of processing, methylation of alpha chains at Lys-40 is found in mitotic microtubules and is required for normal mitosis and cytokinesis contributing to genomic stability. Nitration of Tyr-451 is irreversible and interferes with normal dynein intracellular distribution. Post-translationally, undergoes a tyrosination/detyrosination cycle, the cyclic removal and re-addition of a C-terminal tyrosine residue by the enzymes tubulin tyrosine carboxypeptidase (MATCAP1/KIAA0895L, VASH1 or VASH2) and tubulin tyrosine ligase (TTL), respectively. In terms of processing, tyrosination promotes microtubule interaction with CAP-Gly domain-containing proteins such as CLIP1, CLIP2 and DCTN1. Tyrosination regulates the initiation of dynein-dynactin motility via interaction with DCTN1, which brings the dynein-dynactin complex into contact with microtubules. In neurons, tyrosinated tubulins mediate the initiation of retrograde vesicle transport. Detyrosination is involved in metaphase plate congression by guiding chromosomes during mitosis: detyrosination promotes interaction with CENPE, promoting pole-proximal transport of chromosomes toward the equator. Detyrosination increases microtubules-dependent mechanotransduction in dystrophic cardiac and skeletal muscle. In cardiomyocytes, detyrosinated microtubules are required to resist to contractile compression during contraction: detyrosination promotes association with desmin (DES) at force-generating sarcomeres, leading to buckled microtubules and mechanical resistance to contraction.

It localises to the cytoplasm. It is found in the cytoskeleton. It catalyses the reaction GTP + H2O = GDP + phosphate + H(+). In terms of biological role, tubulin is the major constituent of microtubules, protein filaments consisting of alpha- and beta-tubulin heterodimers. Microtubules grow by the addition of GTP-tubulin dimers to the microtubule end, where a stabilizing cap forms. Below the cap, tubulin dimers are in GDP-bound state, owing to GTPase activity of alpha-tubulin. This Homo sapiens (Human) protein is Tubulin alpha-1B chain (TUBA1B).